We begin with the raw amino-acid sequence, 213 residues long: Protein GET1 (213 aa).

The Lumenal segment spans residues 1–4; sequence MPSL. A helical membrane pass occupies residues 5–24; that stretch reads LLVVFILQFLLHIINTVGAS. The Cytoplasmic segment spans residues 25–110; it reads TVNDLLWILY…AFTSAVSTLR (86 aa). Positions 41–68 form a coiled coil; the sequence is TSSSAQKAQKLKKEIVQLKRELGATSAQ. Residues 111 to 131 traverse the membrane as a helical segment; the sequence is WLGTQGLRFVLQFWFAKSPMF. The Lumenal portion of the chain corresponds to 132–155; it reads WMPAGWLPFYVEWILSFPRAPLGS. A helical transmembrane segment spans residues 156–172; the sequence is VSINVWGIACASMIALA. Over 173-213 the chain is Cytoplasmic; sequence AEGLAAVWVLATKRPTPIATEKKEAMAFAADQKSSGEKKEL.

It belongs to the WRB/GET1 family. Interacts with GET3.

Its subcellular location is the endoplasmic reticulum membrane. Functionally, required for the post-translational delivery of tail-anchored (TA) proteins to the endoplasmic reticulum. Acts as a membrane receptor for soluble GET3, which recognizes and selectively binds the transmembrane domain of TA proteins in the cytosol. The protein is Protein GET1 of Phaeosphaeria nodorum (strain SN15 / ATCC MYA-4574 / FGSC 10173) (Glume blotch fungus).